The chain runs to 198 residues: Nucleoid occlusion factor SlmA (198 aa).

The 62-residue stretch at 9–70 (RNRREEILQA…SLIEFIEDSL (62 aa)) folds into the HTH tetR-type domain. A DNA-binding region (H-T-H motif) is located at residues 33–52 (TTAKLAANVGVSEAALYRHF). Residues 119 to 144 (DRLQGRINQLFERIEMQLRQVLREKK) adopt a coiled-coil conformation.

This sequence belongs to the nucleoid occlusion factor SlmA family. As to quaternary structure, homodimer. Interacts with FtsZ.

It is found in the cytoplasm. The protein resides in the nucleoid. In terms of biological role, required for nucleoid occlusion (NO) phenomenon, which prevents Z-ring formation and cell division over the nucleoid. Acts as a DNA-associated cell division inhibitor that binds simultaneously chromosomal DNA and FtsZ, and disrupts the assembly of FtsZ polymers. SlmA-DNA-binding sequences (SBS) are dispersed on non-Ter regions of the chromosome, preventing FtsZ polymerization at these regions. In Yersinia pseudotuberculosis serotype I (strain IP32953), this protein is Nucleoid occlusion factor SlmA.